The chain runs to 432 residues: Bifunctional protein GlmU (432 aa).

A pyrophosphorylase region spans residues 1–223 (MGKKSIIILA…EENFKGVNSK (223 aa)). Residues 9–12 (LAAG), K23, Q75, and 82–83 (GT) contribute to the UDP-N-acetyl-alpha-D-glucosamine site. A Mg(2+)-binding site is contributed by D103. Residues G135, E149, N164, and N221 each contribute to the UDP-N-acetyl-alpha-D-glucosamine site. Mg(2+) is bound at residue N221. The tract at residues 224-244 (VELADAEVIHQNRIKKEFMKA) is linker. An N-acetyltransferase region spans residues 245 to 432 (GVIMRLPDTI…FYKHFSSKKK (188 aa)). UDP-N-acetyl-alpha-D-glucosamine-binding residues include R308 and K325. H336 functions as the Proton acceptor in the catalytic mechanism. UDP-N-acetyl-alpha-D-glucosamine-binding residues include Y339 and N350. Residues 359 to 360 (NY), S378, A396, and R413 contribute to the acetyl-CoA site.

The protein in the N-terminal section; belongs to the N-acetylglucosamine-1-phosphate uridyltransferase family. It in the C-terminal section; belongs to the transferase hexapeptide repeat family. As to quaternary structure, homotrimer. Mg(2+) is required as a cofactor.

The protein localises to the cytoplasm. The catalysed reaction is alpha-D-glucosamine 1-phosphate + acetyl-CoA = N-acetyl-alpha-D-glucosamine 1-phosphate + CoA + H(+). It carries out the reaction N-acetyl-alpha-D-glucosamine 1-phosphate + UTP + H(+) = UDP-N-acetyl-alpha-D-glucosamine + diphosphate. It functions in the pathway nucleotide-sugar biosynthesis; UDP-N-acetyl-alpha-D-glucosamine biosynthesis; N-acetyl-alpha-D-glucosamine 1-phosphate from alpha-D-glucosamine 6-phosphate (route II): step 2/2. Its pathway is nucleotide-sugar biosynthesis; UDP-N-acetyl-alpha-D-glucosamine biosynthesis; UDP-N-acetyl-alpha-D-glucosamine from N-acetyl-alpha-D-glucosamine 1-phosphate: step 1/1. The protein operates within bacterial outer membrane biogenesis; LPS lipid A biosynthesis. Its function is as follows. Catalyzes the last two sequential reactions in the de novo biosynthetic pathway for UDP-N-acetylglucosamine (UDP-GlcNAc). The C-terminal domain catalyzes the transfer of acetyl group from acetyl coenzyme A to glucosamine-1-phosphate (GlcN-1-P) to produce N-acetylglucosamine-1-phosphate (GlcNAc-1-P), which is converted into UDP-GlcNAc by the transfer of uridine 5-monophosphate (from uridine 5-triphosphate), a reaction catalyzed by the N-terminal domain. The protein is Bifunctional protein GlmU of Aliarcobacter butzleri (strain RM4018) (Arcobacter butzleri).